A 181-amino-acid polypeptide reads, in one-letter code: CAPA peptides (181 aa).

The N-terminal stretch at 1-22 is a signal peptide; the sequence is MQDNRFFILMILLVFSTSLNQG. Positions 23 to 29 are excised as a propeptide; that stretch reads QKLKAND. Isoleucine amide is present on I41. A propeptide spanning residues 44–54 is cleaved from the precursor; sequence NSEISSFSRSE. I65 bears the Isoleucine amide mark. A propeptide spanning residues 68 to 181 is cleaved from the precursor; it reads SDVSSFDNLN…ENERDTANFL (114 aa). The disordered stretch occupies residues 159-181; that stretch reads TQGQGGYTPRLGRENERDTANFL. The span at 169 to 181 shows a compositional bias: basic and acidic residues; that stretch reads LGRENERDTANFL.

A pyrokinin potentially constituted by residues Asn-158 to Gly-170 has so far not been detected and might be completely absent in ants. In terms of tissue distribution, periviscerokinin 1 and 2 are expressed in central brain, antennal lobes and gnathal, thoracic and abominal ganglia. Periviscerokinin 2 is also expressed in the retrocerebral complex (at protein level).

Its subcellular location is the secreted. In terms of biological role, periviscerokinins mediate visceral muscle contractile activity (myotropic activity). The sequence is that of CAPA peptides from Camponotus floridanus (Florida carpenter ant).